The sequence spans 855 residues: Discoidin domain-containing receptor 2 (855 aa).

A signal peptide spans 1–21 (MILIPRMLLVLFLLLPILSSA). The Extracellular segment spans residues 22-399 (KAQVNPAICR…MLKVDDSNTR (378 aa)). The F5/8 type C domain maps to 30-185 (CRYPLGMSGG…VCMRVELYGC (156 aa)). 2 disulfide bridges follow: Cys30/Cys185 and Cys73/Cys177. N-linked (GlcNAc...) asparagine glycosylation is found at Asn121, Asn213, Asn261, Asn280, and Asn372. Residues 400–421 (ILIGCLVAIIFILLAIIVIILW) traverse the membrane as a helical segment. The Cytoplasmic segment spans residues 422-855 (RQFWQKMLEK…HLLLLQQGDE (434 aa)). The tract at residues 452-471 (SMFNNNRSSSPSEQGSNSTY) is disordered. Tyr471 bears the Phosphotyrosine; by SRC and autocatalysis mark. Residues 563-849 (LTFKEKLGEG…PSFQEIHLLL (287 aa)) enclose the Protein kinase domain. Residues 569–577 (LGEGQFGEV) and Lys608 contribute to the ATP site. Asp710 acts as the Proton acceptor in catalysis. Phosphotyrosine; by SRC and autocatalysis is present on residues Tyr736, Tyr740, and Tyr741.

Belongs to the protein kinase superfamily. Tyr protein kinase family. Insulin receptor subfamily. In terms of assembly, binds hydroxyproline-rich sequence motifs in fibrillar, glycosylated collagen, such as the GQOGVMGFO motif, where O stands for hydroxyproline. Interacts with SRC. Interacts (tyrosine phosphorylated) with SHC1. In terms of processing, N-glycosylated. Tyrosine phosphorylated in response to collagen binding. Phosphorylated by SRC; this is required for activation and subsequent autophosphorylation on additional tyrosine residues. Detected in osteocytes, osteoblastic cells in subchondral bone, bone lining cells, tibia and cartilage (at protein level). Detected at high levels in heart and lung, and at low levels in brain, placenta, liver, skeletal muscle, pancreas, and kidney.

The protein resides in the cell membrane. It catalyses the reaction L-tyrosyl-[protein] + ATP = O-phospho-L-tyrosyl-[protein] + ADP + H(+). Its activity is regulated as follows. Present in an inactive state in the absence of collagen binding and phosphorylation by SRC. Tyrosine phosphorylation enhances the affinity for ATP and the catalytic activity. Functionally, tyrosine kinase involved in the regulation of tissues remodeling. It functions as a cell surface receptor for fibrillar collagen and regulates cell differentiation, remodeling of the extracellular matrix, cell migration and cell proliferation. Required for normal bone development. Regulates osteoblast differentiation and chondrocyte maturation via a signaling pathway that involves MAP kinases and leads to the activation of the transcription factor RUNX2. Regulates remodeling of the extracellular matrix by up-regulation of the collagenases MMP1, MMP2 and MMP13, and thereby facilitates cell migration and tumor cell invasion. Promotes fibroblast migration and proliferation, and thereby contributes to cutaneous wound healing. The protein is Discoidin domain-containing receptor 2 (DDR2) of Homo sapiens (Human).